The following is a 307-amino-acid chain: Mitochondrial glycine transporter YMC1 (307 aa).

Solcar repeat units follow at residues 26–106 (VKDL…MKRF), 121–204 (PQYY…LIAN), and 218–305 (PAWK…AMRL). The next 6 helical transmembrane spans lie at 29–49 (LLAGTAGGIAQVLVGQPFDTT), 83–103 (LTPLIGVGACVSLQFGVNEAM), 118–138 (LSLPQYYACGVTGGIVNSFLA), 183–203 (TILREGHGCGTYFLVYEALIA), 223–243 (CIFGALSGTALWLMVYPLDVI), and 277–298 (FFKGFGPTMLRAAPANGATFAT).

It belongs to the mitochondrial carrier (TC 2.A.29) family.

It localises to the mitochondrion inner membrane. Functionally, secondary mitochondrial glycine transporter required for the biosynthesis of heme at high glycine concentrations. Imports the precursor glycine into the mitochondrial matrix, where it is condensed with succinyl-CoA to produce 5-aminolevulinate (ALA), the first step of heme biosynthesis. The protein is Mitochondrial glycine transporter YMC1 of Saccharomyces cerevisiae (strain ATCC 204508 / S288c) (Baker's yeast).